The primary structure comprises 146 residues: MIYWIFLVLAIICEVIGTLSMKYASVSGGYTGMIVMWLMIATSYIFLAIAVKKVALGVAYALWEGIGIVIITTFSVLWFGESLSALKLGGLAMLIAGITLIKSGTKKSVVAKKTTDSVKNIAGKAKQVATVVKGVNKPISSNVKEA.

4 consecutive transmembrane segments (helical) span residues 1–21 (MIYW…TLSM), 31–51 (TGMI…AIAV), 54–74 (VALG…ITTF), and 76–96 (VLWF…MLIA).

The protein belongs to the drug/metabolite transporter (DMT) superfamily. Small multidrug resistance (SMR) (TC 2.A.7.1) family. MdtJ subfamily. As to quaternary structure, forms a complex with MdtI.

Its subcellular location is the cell inner membrane. In terms of biological role, catalyzes the excretion of spermidine. This chain is Spermidine export protein MdtJ, found in Proteus mirabilis (strain HI4320).